Reading from the N-terminus, the 113-residue chain is Large ribosomal subunit protein uL22 (113 aa).

This sequence belongs to the universal ribosomal protein uL22 family. As to quaternary structure, part of the 50S ribosomal subunit.

Functionally, this protein binds specifically to 23S rRNA; its binding is stimulated by other ribosomal proteins, e.g. L4, L17, and L20. It is important during the early stages of 50S assembly. It makes multiple contacts with different domains of the 23S rRNA in the assembled 50S subunit and ribosome. The globular domain of the protein is located near the polypeptide exit tunnel on the outside of the subunit, while an extended beta-hairpin is found that lines the wall of the exit tunnel in the center of the 70S ribosome. This chain is Large ribosomal subunit protein uL22, found in Desulforamulus reducens (strain ATCC BAA-1160 / DSM 100696 / MI-1) (Desulfotomaculum reducens).